The sequence spans 95 residues: Small ribosomal subunit protein uS19 (95 aa).

Belongs to the universal ribosomal protein uS19 family.

Functionally, protein S19 forms a complex with S13 that binds strongly to the 16S ribosomal RNA. In Treponema pallidum (strain Nichols), this protein is Small ribosomal subunit protein uS19 (rpsS).